A 261-amino-acid chain; its full sequence is Pyridoxine 5'-phosphate synthase (261 aa).

3-amino-2-oxopropyl phosphate is bound at residue Asn6. 1-deoxy-D-xylulose 5-phosphate is bound at residue 8–9 (DH). Arg17 contributes to the 3-amino-2-oxopropyl phosphate binding site. His42 functions as the Proton acceptor in the catalytic mechanism. 1-deoxy-D-xylulose 5-phosphate is bound by residues Arg44 and His49. Catalysis depends on Glu69, which acts as the Proton acceptor. Thr99 contributes to the 1-deoxy-D-xylulose 5-phosphate binding site. His213 (proton donor) is an active-site residue. Residues Gly214 and 235-236 (GQ) each bind 3-amino-2-oxopropyl phosphate.

This sequence belongs to the PNP synthase family. As to quaternary structure, homooctamer; tetramer of dimers.

It localises to the cytoplasm. It carries out the reaction 3-amino-2-oxopropyl phosphate + 1-deoxy-D-xylulose 5-phosphate = pyridoxine 5'-phosphate + phosphate + 2 H2O + H(+). It functions in the pathway cofactor biosynthesis; pyridoxine 5'-phosphate biosynthesis; pyridoxine 5'-phosphate from D-erythrose 4-phosphate: step 5/5. Catalyzes the complicated ring closure reaction between the two acyclic compounds 1-deoxy-D-xylulose-5-phosphate (DXP) and 3-amino-2-oxopropyl phosphate (1-amino-acetone-3-phosphate or AAP) to form pyridoxine 5'-phosphate (PNP) and inorganic phosphate. This Aliarcobacter butzleri (strain RM4018) (Arcobacter butzleri) protein is Pyridoxine 5'-phosphate synthase.